The sequence spans 354 residues: S-adenosylmethionine:tRNA ribosyltransferase-isomerase (354 aa).

This sequence belongs to the QueA family. In terms of assembly, monomer.

It localises to the cytoplasm. The catalysed reaction is 7-aminomethyl-7-carbaguanosine(34) in tRNA + S-adenosyl-L-methionine = epoxyqueuosine(34) in tRNA + adenine + L-methionine + 2 H(+). It functions in the pathway tRNA modification; tRNA-queuosine biosynthesis. Its function is as follows. Transfers and isomerizes the ribose moiety from AdoMet to the 7-aminomethyl group of 7-deazaguanine (preQ1-tRNA) to give epoxyqueuosine (oQ-tRNA). This Thermosynechococcus vestitus (strain NIES-2133 / IAM M-273 / BP-1) protein is S-adenosylmethionine:tRNA ribosyltransferase-isomerase.